The primary structure comprises 143 residues: Spliceosomal protein DIB1 (143 aa).

Position 2 is an N-acetylalanine (alanine 2).

This sequence belongs to the DIM1 family. In terms of assembly, component of the U4/U6-U5 tri-snRNP complex composed of the U4, U6 and U5 snRNAs and at least PRP3, PRP4, PRP6, PRP8, PRP18, PRP31, PRP38, SNU13, SNU23, SNU66, SNU114, SPP381, SMB1, SMD1, SMD2, SMD3, SMX2, SMX3, LSM2, LSM3, LSM4, LSM5, LSM6, LSM7, LSM8, BRR2 and DIB1.

The protein resides in the nucleus. Functionally, essential role in pre-mRNA splicing. Also essential for entry into mitosis (G2/M progression) as well as for chromosome segregation during mitosis. The sequence is that of Spliceosomal protein DIB1 (DIB1) from Saccharomyces cerevisiae (strain ATCC 204508 / S288c) (Baker's yeast).